The following is a 342-amino-acid chain: (Lyso)-N-acylphosphatidylethanolamine lipase (342 aa).

Residues 70–323 (PLVMVHGFGG…EIEGASHHVY (254 aa)) form the AB hydrolase-1 domain.

The protein belongs to the peptidase S33 family. ABHD4/ABHD5 subfamily. Highest levels in the CNS and in testis, intermediate levels in liver and kidney. Hardly detectable in heart.

It carries out the reaction N-hexadecanoyl-1,2-di-(9Z-octadecenoyl)-sn-glycero-3-phosphoethanolamine + H2O = N-hexadecanoyl-1-(9Z-octadecenoyl)-sn-glycero-3-phosphoethanolamine + (9Z)-octadecenoate + H(+). It catalyses the reaction an N-acyl-1,2-diacyl-sn-glycero-3-phosphoethanolamine + H2O = N,1-diacyl-sn-glycero-3-phosphoethanolamine + a fatty acid + H(+). The catalysed reaction is N-hexadecanoyl-1-(9Z-octadecenoyl)-sn-glycero-3-phosphoethanolamine + H2O = N-hexadecanoyl-sn-glycero-3-phosphoethanolamine + (9Z)-octadecenoate + H(+). The enzyme catalyses N-octadecanoyl-1-(9Z-octadecenoyl)-sn-glycero-3-phosphoethanolamine + H2O = N-octadecanoyl-sn-glycero-3-phospho-ethanolamine + (9Z)-octadecenoate + H(+). It carries out the reaction N-eicosanoyl-1-(9Z-octadecenoyl)-sn-glycero-3-phosphoethanolamine + H2O = N-eicosanoyl-sn-glycero-3-phosphoethanolamine + (9Z)-octadecenoate + H(+). It catalyses the reaction N,1-di-(9Z-octadecenoyl)-sn-glycero-3-phosphoethanolamine + H2O = N-(9Z-octadecenoyl)-sn-glycero-3-phosphoethanolamine + (9Z)-octadecenoate + H(+). The catalysed reaction is N-(5Z,8Z,11Z,14Z-eicosatetraenoyl)-1-(9Z-octadecenoyl)-sn-glycero-3-phosphoethanolamine + H2O = N-(5Z,8Z,11Z,14Z-eicosatetraenoyl)-sn-glycero-3-phosphoethanolamine + (9Z)-octadecenoate + H(+). The enzyme catalyses 1-octadecanoyl-2-(9Z-octadecenoyl)-sn-glycero-3-phospho-(N-hexadecanoyl)-serine + H2O = 1-octadecanoyl-2-hydroxy-sn-glycero-3-phospho-(N-hexadecanoyl)-serine + (9Z)-octadecenoate + H(+). It carries out the reaction 1-O-(1Z-octadecenoyl)-2-(9Z-octadecenoyl)-sn-glycero-3-phospho-N-hexadecanoyl-ethanolamine + H2O = 1-O-(1Z-octadecenyl)-sn-glycero-3-phospho-N-hexadecanoyl-ethanolamine + (9Z)-octadecenoate + H(+). It catalyses the reaction N,1-diacyl-sn-glycero-3-phosphoethanolamine + H2O = N-acyl-sn-glycero-3-phosphoethanolamine + a fatty acid + H(+). Its function is as follows. Lysophospholipase selective for N-acyl phosphatidylethanolamine (NAPE). Contributes to the biosynthesis of N-acyl ethanolamines, including the endocannabinoid anandamide by hydrolyzing the sn-1 and sn-2 acyl chains from N-acyl phosphatidylethanolamine (NAPE) generating glycerophospho-N-acyl ethanolamine (GP-NAE), an intermediate for N-acyl ethanolamine biosynthesis. Hydrolyzes substrates bearing saturated, monounsaturated, polyunsaturated N-acyl chains. Shows no significant activity towards other lysophospholipids, including lysophosphatidylcholine, lysophosphatidylethanolamine and lysophosphatidylserine. This Mus musculus (Mouse) protein is (Lyso)-N-acylphosphatidylethanolamine lipase.